We begin with the raw amino-acid sequence, 207 residues long: Small ribosomal subunit protein uS2 (207 aa).

Belongs to the universal ribosomal protein uS2 family.

This Nitrosopumilus maritimus (strain SCM1) protein is Small ribosomal subunit protein uS2.